Reading from the N-terminus, the 67-residue chain is Theromin (67 aa).

Positions 2–27 (CENTECPRACPGEYEFDEDGCNTCVC) constitute an Antistasin-like domain.

Homodimer. Post-translationally, eight disulfide bonds are present.

Its subcellular location is the secreted. In terms of biological role, potent thrombin-specific inhibitor. The polypeptide is Theromin (Theromyzon tessulatum (Duck leech)).